The sequence spans 373 residues: Phospho-N-acetylmuramoyl-pentapeptide-transferase (373 aa).

A run of 11 helical transmembrane segments spans residues 16 to 36 (WWTK…AASF), 46 to 66 (LLSL…SWGI), 93 to 113 (PTMG…FVSV), 120 to 140 (QLLA…FDDW), 157 to 177 (LLLQ…QHWI), 185 to 205 (LGIS…VFLA), 216 to 236 (LDGL…VQLM), 242 to 262 (GNPV…GFLM), 270 to 290 (VFMG…VAIL), 298 to 318 (LVMG…VWVF), and 350 to 369 (MVVR…GLLL).

It belongs to the glycosyltransferase 4 family. MraY subfamily. Requires Mg(2+) as cofactor.

Its subcellular location is the cell inner membrane. It carries out the reaction UDP-N-acetyl-alpha-D-muramoyl-L-alanyl-gamma-D-glutamyl-meso-2,6-diaminopimeloyl-D-alanyl-D-alanine + di-trans,octa-cis-undecaprenyl phosphate = di-trans,octa-cis-undecaprenyl diphospho-N-acetyl-alpha-D-muramoyl-L-alanyl-D-glutamyl-meso-2,6-diaminopimeloyl-D-alanyl-D-alanine + UMP. The protein operates within cell wall biogenesis; peptidoglycan biosynthesis. Its function is as follows. Catalyzes the initial step of the lipid cycle reactions in the biosynthesis of the cell wall peptidoglycan: transfers peptidoglycan precursor phospho-MurNAc-pentapeptide from UDP-MurNAc-pentapeptide onto the lipid carrier undecaprenyl phosphate, yielding undecaprenyl-pyrophosphoryl-MurNAc-pentapeptide, known as lipid I. This Prochlorococcus marinus (strain MIT 9313) protein is Phospho-N-acetylmuramoyl-pentapeptide-transferase.